A 494-amino-acid polypeptide reads, in one-letter code: V-type proton ATPase subunit B (494 aa).

Arginine 384 serves as a coordination point for ATP.

It belongs to the ATPase alpha/beta chains family. V-ATPase is a heteromultimeric enzyme made up of two complexes: the ATP-hydrolytic V1 complex and the proton translocation V0 complex. The V1 complex consists of three catalytic AB heterodimers that form a heterohexamer, three peripheral stalks each consisting of EG heterodimers, one central rotor including subunits D and F, and the regulatory subunits C and H. The proton translocation complex V0 consists of the proton transport subunit a, a ring of proteolipid subunits c9c'', rotary subunit d, subunits e and f, and the accessory subunits VhaAC45 and ATP6AP2.

Its function is as follows. Non-catalytic subunit of the V1 complex of vacuolar(H+)-ATPase (V-ATPase), a multisubunit enzyme composed of a peripheral complex (V1) that hydrolyzes ATP and a membrane integral complex (V0) that translocates protons. V-ATPase is responsible for acidifying and maintaining the pH of intracellular compartments and in some cell types, is targeted to the plasma membrane, where it is responsible for acidifying the extracellular environment. Essential for the proper assembly and activity of V-ATPase. The chain is V-type proton ATPase subunit B (VHA55) from Manduca sexta (Tobacco hawkmoth).